The following is a 239-amino-acid chain: Transcriptional activatory protein AadR (239 aa).

Position 27-149 (27-149) interacts with a nucleoside 3',5'-cyclic phosphate; it reads ICGELGPADH…FATRELSLAQ (123 aa). In terms of domain architecture, HTH crp-type spans 158 to 231; sequence RSAEEKVAAF…PDGVRVLDPK (74 aa). Residues 191-210 constitute a DNA-binding region (H-T-H motif); that stretch reads RQDIADFLGLTIETVSRTFT.

In terms of biological role, transcriptional activator of anaerobic gene expression. For aromatic acid degradation. Also required for the anaerobic degradation of benzoate. The polypeptide is Transcriptional activatory protein AadR (aadR) (Rhodopseudomonas palustris (strain ATCC BAA-98 / CGA009)).